Reading from the N-terminus, the 821-residue chain is MGSNLPAQPNLRVTIIAADGLYKRDVFRLPDPFAVATVGGEQTHTTSVIKKTLNPYWNEMFDLRVNEDSILAIQIFDQKKFKKKDQGFLGVINVRIGDVIDLQMGGDEMLTRDLKKSNDNLVVHGKLIINLSTNLSTPNPNQANGLHRTQLGASTSSGLVPQVAPTPSVPQAGPSSVDQSAAASSASLNPQRVPSATRPTSQIAPPNGAPPIANGQGVPRPNLSSFEDNQGRLPAGWERREDNLGRTYYVDHNTRTTTWNRPSANYNEQTQRTQREANMQLERRAHQNRMLPEDRTGASSPNLSETQPQAQTPPAGGSGASNSNVVSMMATGATTAGTGELPPGWEQRTTPEGRPYFVDHNTRTTTWVDPRRQQYIRMYGQNASGGNTTIQQQPVSQLGPLPSGWEMRLTNTARVYFVDHNTKTTTWDDPRLPSSLDQGVPQYKRDFRRKLIYFRSQPALRIMSGQCHVKVRRNNIFEDSYAEIMRQSASDLKKRLMIKFDGEDGLDYGGLSREFFFLLSHEMFNPFYCLFEYSAHDNYTLQINPHSGVNPEHLNYFKFIGRVVGLAIFHRRFLDSFFIGAFYKMMLRKKVSLQDMEGVDEDLHRNLTWTLENDIEGIIDLTFTVDDEKFGERRTIELKPGGEDIPVTNENKHEYVELVTEWKIVKRVEEQFNAFMSGFNELIPADLVNVFDERELELLIGGIADIDVDDWKKHTDYRGYQEQDEVIQNFWKIVRTWDAEQKSRLLQFTTGTSRIPVNGFKDLQGSDGPRRFTIEKSGDPIALPKSHTCFNRLDLPPYKSHEVLEHKLSIAVEETLGFGQE.

Residues 1 to 112 enclose the C2 domain; sequence MGSNLPAQPN…QMGGDEMLTR (112 aa). Composition is skewed to polar residues over residues 133-144 and 188-201; these read TNLSTPNPNQAN and LNPQ…RPTS. Disordered stretches follow at residues 133–239 and 255–359; these read TNLS…GWER and RTTT…YFVD. Positions 202–217 are enriched in low complexity; the sequence is QIAPPNGAPPIANGQG. Positions 231–264 constitute a WW 1 domain; it reads GRLPAGWERREDNLGRTYYVDHNTRTTTWNRPSA. Positions 255–272 are enriched in polar residues; it reads RTTTWNRPSANYNEQTQR. The segment covering 281 to 296 has biased composition (basic and acidic residues); the sequence is LERRAHQNRMLPEDRT. Residues 297 to 312 are compositionally biased toward polar residues; the sequence is GASSPNLSETQPQAQT. The span at 320–339 shows a compositional bias: low complexity; it reads ASNSNVVSMMATGATTAGTG. WW domains lie at 339-372 and 399-432; these read GELP…DPRR and GPLP…DPRL. The region spanning 488-821 is the HECT domain; it reads SASDLKKRLM…VEETLGFGQE (334 aa). The Glycyl thioester intermediate role is filled by C789.

It belongs to the RSP5/NEDD4 family. In terms of assembly, interacts with apyA and creD.

Its subcellular location is the cytoplasm. It catalyses the reaction S-ubiquitinyl-[E2 ubiquitin-conjugating enzyme]-L-cysteine + [acceptor protein]-L-lysine = [E2 ubiquitin-conjugating enzyme]-L-cysteine + N(6)-ubiquitinyl-[acceptor protein]-L-lysine.. It functions in the pathway protein modification; protein ubiquitination. In terms of biological role, E3 ubiquitin-protein ligase which accepts ubiquitin from an E2 ubiquitin-conjugating enzyme in the form of a thioester and then directly transfers the ubiquitin to targeted substrates. Probably involved in the regulatory network controlling carbon source utilization. Ubiquitinates 'Lys-528' of the uric acid/xanthine transporter uapA at the cell membrane, leading to its internalization, sorting into the endosomal pathway to the vacuolar lumen where it is eventually degraded. The chain is E3 ubiquitin-protein ligase RSP5 (hulA) from Emericella nidulans (strain FGSC A4 / ATCC 38163 / CBS 112.46 / NRRL 194 / M139) (Aspergillus nidulans).